The primary structure comprises 404 residues: Cysteine desulfurase IscS (404 aa).

Residues 75 to 76 (AT), N155, Q183, and 203 to 205 (SAH) contribute to the pyridoxal 5'-phosphate site. K206 is modified (N6-(pyridoxal phosphate)lysine). T243 is a binding site for pyridoxal 5'-phosphate. The Cysteine persulfide intermediate role is filled by C328. C328 provides a ligand contact to [2Fe-2S] cluster.

Belongs to the class-V pyridoxal-phosphate-dependent aminotransferase family. NifS/IscS subfamily. As to quaternary structure, homodimer. Forms a heterotetramer with IscU, interacts with other sulfur acceptors. Pyridoxal 5'-phosphate is required as a cofactor.

The protein resides in the cytoplasm. The catalysed reaction is (sulfur carrier)-H + L-cysteine = (sulfur carrier)-SH + L-alanine. It functions in the pathway cofactor biosynthesis; iron-sulfur cluster biosynthesis. Functionally, master enzyme that delivers sulfur to a number of partners involved in Fe-S cluster assembly, tRNA modification or cofactor biosynthesis. Catalyzes the removal of elemental sulfur atoms from cysteine to produce alanine. Functions as a sulfur delivery protein for Fe-S cluster synthesis onto IscU, an Fe-S scaffold assembly protein, as well as other S acceptor proteins. In Pseudomonas fluorescens (strain Pf0-1), this protein is Cysteine desulfurase IscS.